Reading from the N-terminus, the 128-residue chain is Azurin (128 aa).

The Plastocyanin-like domain maps to 1–128 (AECKTTIDST…SMMKGTVTLK (128 aa)). A disulfide bridge links Cys-3 with Cys-26. Residues His-46, Cys-112, His-117, and Met-121 each coordinate Cu cation.

It localises to the periplasm. Transfers electrons from cytochrome c551 to cytochrome oxidase. This Pseudomonas fluorescens biotype B protein is Azurin.